A 479-amino-acid polypeptide reads, in one-letter code: Anaerobic nitric oxide reductase flavorubredoxin (479 aa).

The segment at 30 to 210 (LRGSSYNSYL…PFSRLVTPKI (181 aa)) is zinc metallo-hydrolase. Fe cation-binding residues include histidine 79, glutamate 81, aspartate 83, histidine 147, aspartate 166, and histidine 227. One can recognise a Flavodoxin-like domain in the interval 254 to 393 (ITIFYDTMSN…LCRQHGRDIA (140 aa)). FMN-binding positions include 260–264 (TMSNN) and 342–369 (AFGS…EMSL). One can recognise a Rubredoxin-like domain in the interval 423–474 (GPKMQCSVCQWIYDPALGEPLQDVAPGTPWSDVPDNFLCPECSLGKDVFDVL). 4 residues coordinate Fe cation: cysteine 428, cysteine 431, cysteine 461, and cysteine 464.

The protein in the N-terminal section; belongs to the zinc metallo-hydrolase group 3 family. Homotetramer. Requires Fe cation as cofactor. FMN serves as cofactor.

The protein localises to the cytoplasm. Its pathway is nitrogen metabolism; nitric oxide reduction. Anaerobic nitric oxide reductase; uses NADH to detoxify nitric oxide (NO), protecting several 4Fe-4S NO-sensitive enzymes. Has at least 2 reductase partners, only one of which (NorW, flavorubredoxin reductase) has been identified. NO probably binds to the di-iron center; electrons enter from the NorW at rubredoxin and are transferred sequentially to the FMN center and the di-iron center. Also able to function as an aerobic oxygen reductase. In Salmonella typhi, this protein is Anaerobic nitric oxide reductase flavorubredoxin.